Here is a 209-residue protein sequence, read N- to C-terminus: Ubiquitin-conjugating enzyme E2 S (209 aa).

One can recognise a UBC core domain in the interval 14–160 (QTIRQVMREL…ARMMTEIHAQ (147 aa)). Cys98 acts as the Glycyl thioester intermediate in catalysis. The interval 164 to 209 (CGVGASGDAKDDDGPSTKKHAGLDKKLQDKKKEKLLKEKKRMLKRL) is disordered. Positions 171-199 (DAKDDDGPSTKKHAGLDKKLQDKKKEKLL) are enriched in basic and acidic residues. Positions 200 to 209 (KEKKRMLKRL) are enriched in basic residues.

It belongs to the ubiquitin-conjugating enzyme family.

It carries out the reaction S-ubiquitinyl-[E1 ubiquitin-activating enzyme]-L-cysteine + [E2 ubiquitin-conjugating enzyme]-L-cysteine = [E1 ubiquitin-activating enzyme]-L-cysteine + S-ubiquitinyl-[E2 ubiquitin-conjugating enzyme]-L-cysteine.. The protein operates within protein modification; protein ubiquitination. In terms of biological role, catalyzes the covalent attachment of ubiquitin to other proteins. Acts as an essential factor of the anaphase promoting complex/cyclosome (APC/C), a cell cycle-regulated ubiquitin ligase that controls progression through mitosis. Acts by specifically elongating polyubiquitin chains initiated by the E2 enzyme vih/UbcH10 on APC/C substrates, enhancing the degradation of APC/C substrates by the proteasome and promoting mitotic exit. The chain is Ubiquitin-conjugating enzyme E2 S from Drosophila yakuba (Fruit fly).